Reading from the N-terminus, the 470-residue chain is Glutamate--tRNA ligase (470 aa).

A 'HIGH' region motif is present at residues 15 to 25 (PSPTGFLHIGG). Residues 240–244 (KLSKR) carry the 'KMSKS' region motif. K243 is a binding site for ATP.

This sequence belongs to the class-I aminoacyl-tRNA synthetase family. Glutamate--tRNA ligase type 1 subfamily. Monomer.

It localises to the cytoplasm. The catalysed reaction is tRNA(Glu) + L-glutamate + ATP = L-glutamyl-tRNA(Glu) + AMP + diphosphate. In terms of biological role, catalyzes the attachment of glutamate to tRNA(Glu) in a two-step reaction: glutamate is first activated by ATP to form Glu-AMP and then transferred to the acceptor end of tRNA(Glu). The chain is Glutamate--tRNA ligase from Caulobacter vibrioides (strain ATCC 19089 / CIP 103742 / CB 15) (Caulobacter crescentus).